The following is a 130-amino-acid chain: Small ribosomal subunit protein uS11c (130 aa).

It belongs to the universal ribosomal protein uS11 family. As to quaternary structure, part of the 30S ribosomal subunit.

Its subcellular location is the plastid. It localises to the chloroplast. This Adiantum capillus-veneris (Maidenhair fern) protein is Small ribosomal subunit protein uS11c.